Here is a 487-residue protein sequence, read N- to C-terminus: FAD-dependent oxidoreductase domain-containing protein 1 (487 aa).

Residues 62–82 (EQADVVIIGGGILGLSVAFWL) traverse the membrane as a helical segment.

As to quaternary structure, associates with components of the mitochondrial respiratory chain complex I. FAD serves as cofactor.

It is found in the mitochondrion inner membrane. In terms of biological role, required for the assembly of the mitochondrial membrane respiratory chain NADH dehydrogenase (Complex I). Involved in mid-late stages of complex I assembly. In Mus musculus (Mouse), this protein is FAD-dependent oxidoreductase domain-containing protein 1 (Foxred1).